The sequence spans 284 residues: Pseudouridine-5'-phosphate glycosidase (284 aa).

Glu-8 serves as the catalytic Proton donor. The substrate site is built by Lys-69 and Val-89. Asp-119 lines the Mn(2+) pocket. A substrate-binding site is contributed by 121–123; the sequence is SQD. The active-site Nucleophile is the Lys-140.

It belongs to the pseudouridine-5'-phosphate glycosidase family. In terms of assembly, homotrimer. The cofactor is Mn(2+).

It carries out the reaction D-ribose 5-phosphate + uracil = psi-UMP + H2O. In terms of biological role, catalyzes the reversible cleavage of pseudouridine 5'-phosphate (PsiMP) to ribose 5-phosphate and uracil. Functions biologically in the cleavage direction, as part of a pseudouridine degradation pathway. The chain is Pseudouridine-5'-phosphate glycosidase from Pseudothermotoga lettingae (strain ATCC BAA-301 / DSM 14385 / NBRC 107922 / TMO) (Thermotoga lettingae).